Here is a 700-residue protein sequence, read N- to C-terminus: Elongation factor G 1 (700 aa).

A tr-type G domain is found at 8-290; that stretch reads QNYRNIGISA…AVIEFMPSPI (283 aa). Residues 17–24, 88–92, and 142–145 contribute to the GTP site; these read AHIDAGKT, DTPGH, and NKMD.

The protein belongs to the TRAFAC class translation factor GTPase superfamily. Classic translation factor GTPase family. EF-G/EF-2 subfamily.

The protein localises to the cytoplasm. Catalyzes the GTP-dependent ribosomal translocation step during translation elongation. During this step, the ribosome changes from the pre-translocational (PRE) to the post-translocational (POST) state as the newly formed A-site-bound peptidyl-tRNA and P-site-bound deacylated tRNA move to the P and E sites, respectively. Catalyzes the coordinated movement of the two tRNA molecules, the mRNA and conformational changes in the ribosome. In Polaromonas sp. (strain JS666 / ATCC BAA-500), this protein is Elongation factor G 1.